The sequence spans 318 residues: Ankyrin repeat domain-containing protein 1 (318 aa).

Positions 37–77 (ALEKQEDLKTTSKSLIELEEEKQIKEKQLKSELLKKKLEER) form a coiled coil. 6 ANK repeats span residues 118 to 147 (VDQTTFFKAALDNKMPVIEKYLADGGDPNT), 151 to 180 (YKRTALHRACSEGHTDMVEKLIEAGANIEF), 184 to 213 (LESTALHWTCRGGSVETLKLLLNKGAAINA), 217 to 246 (LLSTPLHVAVRTGHYECAEHLIACEADLHA), 250 to 279 (EGDTPMHDGVRLNRYKMMRLLILYGVDLNI), and 283 to 314 (AGKTPMELVMQWQNGAKEIFNGLQSKSYKNSH).

The protein resides in the nucleus. In terms of biological role, may act as a nuclear transcription factor that negatively regulates the expression of cardiac genes. The polypeptide is Ankyrin repeat domain-containing protein 1 (ankrd1) (Xenopus tropicalis (Western clawed frog)).